A 272-amino-acid chain; its full sequence is MARLAAFDMDGTLLMPDHRLGDKTLSTLKRLHDRDITLTFATGRHVLEMRHLLGALSLDAFLITGNGTRIHSVEGEVLHRQDLDPDVADLVLHSTWETEASIHVFNDTGWLTGKEIPELLHAHVYSGFRYQLTDLRRIPAHSVTKICFCGDHDDLCRLRIQLNDALGNRAHLTFSAMDCLEVLPVGCNKGSALAVLSDHLGLTLQDCMAFGDAMNDREMLGSVGRGLIMGNAMPQLIAELSHLPVIGHCRNEAVSHFLTHWLDQPNLPYSPE.

Asp8 serves as the catalytic Nucleophile. The Mg(2+) site is built by Asp8, Asp10, and Asp212.

It belongs to the HAD-like hydrolase superfamily. Cof family. The cofactor is Mg(2+).

It carries out the reaction 4-amino-2-methyl-5-(diphosphooxymethyl)pyrimidine + H2O = 4-amino-2-methyl-5-(phosphooxymethyl)pyrimidine + phosphate + H(+). In terms of biological role, catalyzes the hydrolysis of 4-amino-2-methyl-5-hydroxymethylpyrimidine pyrophosphate (HMP-PP) to 4-amino-2-methyl-5-hydroxymethylpyrimidine phosphate (HMP-P). This chain is HMP-PP phosphatase, found in Enterobacter sp. (strain 638).